The chain runs to 348 residues: Chlorophyll(ide) b reductase NOL, chloroplastic (348 aa).

A chloroplast-targeting transit peptide spans 1 to 61; that stretch reads MATWSGFNVS…TRQNLTVTPS (61 aa). 84 to 108 contributes to the NAD(+) binding site; sequence ITGSTKGIGYALAREFLKAGDNVVI. The active-site Proton acceptor is the tyrosine 233.

Belongs to the short-chain dehydrogenases/reductases (SDR) family. Interacts with NCY1 to form a complex that acts as a chlorophyll b reductase. Interacts with HCAR, RCCR and the LHCII complex. Part of a SGR1-CCE-LHCII complex, which acts in chlorophyll breakdown.

The protein localises to the plastid. It localises to the chloroplast thylakoid membrane. It catalyses the reaction 7(1)-hydroxychlorophyllide a + NAD(+) = chlorophyllide b + NADH + H(+). The catalysed reaction is 7(1)-hydroxychlorophyllide a + NADP(+) = chlorophyllide b + NADPH + H(+). Required for chlorophyll b degradation. Chlorophyll b, chlorophyllide b, pheophorbide b and pheophytin b can be used as substrates. Belongs to the chlorophyll catabolic enzymes (CCEs). The chain is Chlorophyll(ide) b reductase NOL, chloroplastic (NOL) from Arabidopsis thaliana (Mouse-ear cress).